The sequence spans 263 residues: Tryptophan synthase alpha chain (263 aa).

Catalysis depends on proton acceptor residues Glu-49 and Asp-60.

Belongs to the TrpA family. As to quaternary structure, tetramer of two alpha and two beta chains.

It catalyses the reaction (1S,2R)-1-C-(indol-3-yl)glycerol 3-phosphate + L-serine = D-glyceraldehyde 3-phosphate + L-tryptophan + H2O. It participates in amino-acid biosynthesis; L-tryptophan biosynthesis; L-tryptophan from chorismate: step 5/5. Functionally, the alpha subunit is responsible for the aldol cleavage of indoleglycerol phosphate to indole and glyceraldehyde 3-phosphate. This chain is Tryptophan synthase alpha chain, found in Jannaschia sp. (strain CCS1).